The chain runs to 295 residues: Protein NEOXANTHIN-DEFICIENT 1 (295 aa).

The disordered stretch occupies residues 221 to 251 (PAKVSGPSESDADKENSSEDQSSNVESVSRV).

Functionally, required for neoxanthin biosynthesis. Probably not involved directly in the enzymatic conversion of violaxanthin to neoxanthin. Is necessary but not sufficient for neoxanthin synthesis. Seems not required for abscisic acid (ABA) biosynthesis in response to drought stress. The sequence is that of Protein NEOXANTHIN-DEFICIENT 1 from Solanum lycopersicum (Tomato).